We begin with the raw amino-acid sequence, 115 residues long: U3-lycotoxin-Ls1k (115 aa).

The signal sequence occupies residues 1–20; that stretch reads MKSVLLFGVLLVTLFSYSSA. A propeptide spanning residues 21-44 is cleaved from the precursor; it reads EMLDDFDQADEDELLSLIEKEEAR. 4 disulfides stabilise this stretch: Cys-48-Cys-63, Cys-55-Cys-72, Cys-62-Cys-87, and Cys-74-Cys-85.

This sequence belongs to the neurotoxin 19 (CSTX) family. 01 subfamily. In terms of tissue distribution, expressed by the venom gland.

It localises to the secreted. This is U3-lycotoxin-Ls1k from Lycosa singoriensis (Wolf spider).